We begin with the raw amino-acid sequence, 250 residues long: MTQNIQKNIDQVVEWLREQVRNAGAKGLTVGISGGIDSAVVACLIKKAFPENSLGVILPIKSSTKDVEHGILTAEACGIEYIEIDLGEEHNTVANKVVHQLNNKNLFNTGMERAMDSNLRARLRMSTLYAVANNLNYLVVGTDNAAEIYTGYFTKYGDGGVDILPIASLKKYEVYEWAKVLGVPKEVLEKEPSAGLWEGQTDEGEMGTSYKYIDEFLEGKAIPEKDLTVIERLHRNSAHKRTMPPSPKIG.

31–38 (GISGGIDS) is an ATP binding site. Asp37 is a binding site for Mg(2+). Position 122 (Arg122) interacts with deamido-NAD(+). Thr142 is a binding site for ATP. Glu147 contributes to the Mg(2+) binding site. 2 residues coordinate deamido-NAD(+): Lys155 and Asp162. Residues Lys171 and Ser193 each contribute to the ATP site. A deamido-NAD(+)-binding site is contributed by 239–240 (HK).

The protein belongs to the NAD synthetase family. As to quaternary structure, homodimer.

The catalysed reaction is deamido-NAD(+) + NH4(+) + ATP = AMP + diphosphate + NAD(+) + H(+). It functions in the pathway cofactor biosynthesis; NAD(+) biosynthesis; NAD(+) from deamido-NAD(+) (ammonia route): step 1/1. In terms of biological role, catalyzes the ATP-dependent amidation of deamido-NAD to form NAD. Uses ammonia as a nitrogen source. This is NH(3)-dependent NAD(+) synthetase from Alkaliphilus oremlandii (strain OhILAs) (Clostridium oremlandii (strain OhILAs)).